The primary structure comprises 243 residues: Peptide deformylase, mitochondrial (243 aa).

The N-terminal 39 residues, 1-39 (MARLWGALSLWPLWAAVPWGGAAAVGVRACSSTAAPDGV), are a transit peptide targeting the mitochondrion. The substrate site is built by glycine 71, proline 169, and glycine 171. A hydrophobic dimerization interface region spans residues 165 to 175 (LVTFPEGCESV). Cysteine 172 and histidine 214 together coordinate Co(2+). Glutamate 215 is an active-site residue. Histidine 218 serves as a coordination point for Co(2+).

It belongs to the polypeptide deformylase family. Homodimer. The cofactor is Co(2+). In terms of tissue distribution, ubiquitous.

Its subcellular location is the mitochondrion. The enzyme catalyses N-terminal N-formyl-L-methionyl-[peptide] + H2O = N-terminal L-methionyl-[peptide] + formate. Removes the formyl group from the N-terminal Met of newly synthesized proteins. The sequence is that of Peptide deformylase, mitochondrial from Homo sapiens (Human).